The sequence spans 317 residues: Universal stress protein Mb2019 (317 aa).

ATP contacts are provided by residues G13, 128-134, 142-143, G175, D208, 277-283, and 291-293; these read GYRGQGA, SV, GSHGRGG, and SVS.

Belongs to the universal stress protein A family.

This chain is Universal stress protein Mb2019, found in Mycobacterium bovis (strain ATCC BAA-935 / AF2122/97).